The sequence spans 3256 residues: Proliferation marker protein Ki-67 (3256 aa).

Residues Cys-27 to Ile-76 form the FHA domain. A disordered region spans residues Ser-101–Ile-199. The span at Lys-107–Arg-122 shows a compositional bias: basic and acidic residues. A phosphoserine mark is found at Ser-125, Ser-128, and Ser-166. The segment covering Asn-161–Asp-173 has biased composition (basic and acidic residues). A compositionally biased stretch (polar residues) spans Ser-174 to His-183. Lys-245 participates in a covalent cross-link: Glycyl lysine isopeptide (Lys-Gly) (interchain with G-Cter in SUMO2). A phosphoserine mark is found at Ser-264, Ser-296, and Ser-308. Disordered regions lie at residues Ala-271–Ile-426 and Arg-513–His-542. Residues Asp-314–Glu-324 are compositionally biased toward basic and acidic residues. Phosphothreonine is present on residues Thr-328 and Thr-347. Positions Val-349–Pro-358 are enriched in polar residues. Phosphoserine occurs at positions 352, 357, and 374. Thr-401 bears the Phosphothreonine mark. Position 411 is a phosphoserine (Ser-411). Polar residues predominate over residues Lys-414–Ser-425. Residues Glu-495–Lys-678 are positively charged patch (CP). In terms of domain architecture, PP1-binding spans Lys-502–Lys-549. A Phosphoserine modification is found at Ser-538. Thr-543 carries the phosphothreonine modification. The segment at Ser-575 to Ser-632 is disordered. Ser-579 and Ser-584 each carry phosphoserine. The span at Pro-603–Glu-612 shows a compositional bias: polar residues. Ser-648 carries the post-translational modification Phosphoserine. Residues Thr-674–Ser-707 form a disordered region. Residues Val-676–Thr-694 are compositionally biased toward basic residues. Thr-761 is modified (phosphothreonine). The tract at residues Ser-853–Lys-886 is disordered. Phosphoserine is present on Ser-859. Polar residues predominate over residues Ser-866–Arg-882. The tract at residues Gly-1000–Pro-2928 is 16 X 122 AA approximate repeats. 6 K167R repeats span residues Lys-1001–Pro-1112, Lys-1123–Pro-1234, Lys-1245–Pro-1356, Lys-1367–Pro-1477, Lys-1488–Thr-1597, and Lys-1609–Pro-1720. Thr-1017 is modified (phosphothreonine). Residues Lys-1022 and Lys-1035 each participate in a glycyl lysine isopeptide (Lys-Gly) (interchain with G-Cter in SUMO2) cross-link. Positions Thr-1045–Lys-1073 are disordered. Residues Thr-1052–Pro-1072 are compositionally biased toward basic and acidic residues. Residue Ser-1071 is modified to Phosphoserine. At Thr-1091 the chain carries Phosphothreonine. Residue Lys-1093 forms a Glycyl lysine isopeptide (Lys-Gly) (interchain with G-Cter in SUMO1); alternate linkage. A Glycyl lysine isopeptide (Lys-Gly) (interchain with G-Cter in SUMO2); alternate cross-link involves residue Lys-1093. The residue at position 1098 (Ser-1098) is a Phosphoserine. Residues Phe-1109 to Leu-1151 form a disordered region. Thr-1111 bears the Phosphothreonine mark. Phosphoserine is present on Ser-1131. A Phosphothreonine modification is found at Thr-1139. Ser-1142 carries the phosphoserine modification. The residue at position 1167 (Thr-1167) is a Phosphothreonine. The residue at position 1169 (Ser-1169) is a Phosphoserine. Thr-1176 carries the post-translational modification Phosphothreonine. Glycyl lysine isopeptide (Lys-Gly) (interchain with G-Cter in SUMO2) cross-links involve residues Lys-1185 and Lys-1188. A Phosphothreonine modification is found at Thr-1193. Ser-1207 is modified (phosphoserine). Position 1233 is a phosphothreonine (Thr-1233). Residues Thr-1246–Ala-1276 are disordered. Residues Ser-1253 and Ser-1256 each carry the phosphoserine modification. Polar residues predominate over residues Ser-1253–Lys-1266. Phosphothreonine is present on residues Thr-1261, Thr-1298, Thr-1315, and Thr-1327. Residues Thr-1323–Val-1518 form a disordered region. Ser-1329 is subject to Phosphoserine. Thr-1335 carries the post-translational modification Phosphothreonine. Lys-1337 participates in a covalent cross-link: Glycyl lysine isopeptide (Lys-Gly) (interchain with G-Cter in SUMO2). Position 1355 is a phosphothreonine (Thr-1355). Position 1376 is a phosphoserine (Ser-1376). Phosphothreonine is present on Thr-1383. Ser-1386 is modified (phosphoserine). Basic and acidic residues-rich tracts occupy residues Pro-1394 to Ala-1406 and Thr-1418 to Leu-1442. Phosphothreonine occurs at positions 1420 and 1437. Ser-1496 carries the post-translational modification Phosphoserine. Thr-1503 carries the post-translational modification Phosphothreonine. A Phosphoserine modification is found at Ser-1506. The residue at position 1540 (Thr-1540) is a Phosphothreonine. Tyr-1552 carries the post-translational modification Phosphotyrosine. Phosphothreonine is present on residues Thr-1557 and Thr-1569. Phosphoserine occurs at positions 1571 and 1617. Residues Thr-1597–Ala-1675 form a disordered region. Lys-1639 is subject to N6-acetyllysine. Lys-1643 is covalently cross-linked (Glycyl lysine isopeptide (Lys-Gly) (interchain with G-Cter in SUMO2)). Over residues Thr-1660–Ser-1672 the composition is skewed to basic and acidic residues. Phosphoserine is present on residues Ser-1679 and Ser-1689. 5 disordered regions span residues Ser-1689 to Glu-1708, Phe-1717 to Glu-1765, Phe-1771 to Gly-1790, Thr-1801 to Glu-1824, and Phe-1839 to Val-1886. Lys-1703 is covalently cross-linked (Glycyl lysine isopeptide (Lys-Gly) (interchain with G-Cter in SUMO2)). Phosphothreonine is present on Thr-1719. A Phosphoserine modification is found at Ser-1721. Basic and acidic residues predominate over residues His-1722–Thr-1733. K167R repeat units follow at residues Lys-1731 to Pro-1842, Thr-1854 to Pro-1964, Lys-1975 to Pro-2086, Lys-2097 to Pro-2204, and Lys-2215 to Pro-2326. At Ser-1740 the chain carries Phosphoserine. 4 positions are modified to phosphothreonine: Thr-1747, Thr-1764, Thr-1784, and Thr-1801. Ser-1815 bears the Phosphoserine mark. Phosphothreonine is present on Thr-1841. Phosphoserine is present on residues Ser-1861 and Ser-1864. Residues Ser-1861 to Lys-1874 show a composition bias toward polar residues. Phosphothreonine occurs at positions 1869, 1897, 1906, and 1923. Ser-1937 carries the phosphoserine modification. Residues Phe-1961–Ser-2002 are disordered. Thr-1963 bears the Phosphothreonine mark. The span at His-1966–Thr-1977 shows a compositional bias: basic and acidic residues. A Phosphoserine modification is found at Ser-1983. Lys-2005 is modified (N6-acetyllysine). Residue Lys-2009 forms a Glycyl lysine isopeptide (Lys-Gly) (interchain with G-Cter in SUMO1); alternate linkage. A Glycyl lysine isopeptide (Lys-Gly) (interchain with G-Cter in SUMO2); alternate cross-link involves residue Lys-2009. A disordered region spans residues Lys-2017–Glu-2192. Residues Thr-2028 and Thr-2065 each carry the phosphothreonine modification. Basic and acidic residues-rich tracts occupy residues Thr-2028–Ala-2046 and Arg-2061–Ala-2070. Lys-2067 is covalently cross-linked (Glycyl lysine isopeptide (Lys-Gly) (interchain with G-Cter in SUMO1); alternate). A Glycyl lysine isopeptide (Lys-Gly) (interchain with G-Cter in SUMO2); alternate cross-link involves residue Lys-2067. Ser-2072 is subject to Phosphoserine. Thr-2085 carries the phosphothreonine modification. The segment covering Asp-2087 to Thr-2099 has biased composition (basic and acidic residues). The residue at position 2105 (Ser-2105) is a Phosphoserine. A Phosphothreonine modification is found at Thr-2113. Phosphoserine occurs at positions 2116 and 2135. Basic and acidic residues predominate over residues His-2145–Leu-2168. Thr-2146, Thr-2163, and Thr-2203 each carry phosphothreonine. Positions Ile-2205 to Ile-2400 are disordered. Ser-2223 carries the phosphoserine modification. Residues Thr-2231 and Thr-2233 each carry the phosphothreonine modification. Ser-2239 is modified (phosphoserine). Phosphothreonine is present on Thr-2259. Ser-2261 bears the Phosphoserine mark. Residues Thr-2268, Thr-2285, Thr-2325, Thr-2328, and Thr-2333 each carry the phosphothreonine modification. 5 K167R repeats span residues Lys-2336–Pro-2447, Lys-2458–Pro-2569, Lys-2580–Thr-2688, Lys-2700–Asp-2805, and Lys-2819–Pro-2928. Ser-2344 is modified (phosphoserine). Thr-2352 and Thr-2389 each carry phosphothreonine. A Phosphoserine modification is found at Ser-2395. Thr-2406 carries the phosphothreonine modification. Ser-2420 is subject to Phosphoserine. Phosphothreonine is present on residues Thr-2426 and Thr-2446. The tract at residues Gln-2445–Gln-2480 is disordered. A compositionally biased stretch (basic and acidic residues) spans His-2449–Thr-2460. Residues Ser-2463–Ser-2475 show a composition bias toward polar residues. Ser-2466 carries the post-translational modification Phosphoserine. A Glycyl lysine isopeptide (Lys-Gly) (interchain with G-Cter in SUMO1) cross-link involves residue Lys-2492. The disordered stretch occupies residues Ala-2497 to Ser-2521. The span at Leu-2501–Glu-2514 shows a compositional bias: polar residues. Phosphoserine is present on residues Ser-2505, Ser-2528, and Ser-2588. A disordered region spans residues Gly-2570 to Ile-3256. Basic and acidic residues-rich tracts occupy residues Arg-2609 to Ala-2618, Thr-2632 to Lys-2644, and Glu-2660 to Pro-2675. Lys-2613 is covalently cross-linked (Glycyl lysine isopeptide (Lys-Gly) (interchain with G-Cter in SUMO1); alternate). Residue Lys-2613 forms a Glycyl lysine isopeptide (Lys-Gly) (interchain with G-Cter in SUMO2); alternate linkage. Ser-2638 carries the post-translational modification Phosphoserine. The span at Leu-2685–Leu-2696 shows a compositional bias: polar residues. Residue Ser-2708 is modified to Phosphoserine. Residue Lys-2734 forms a Glycyl lysine isopeptide (Lys-Gly) (interchain with G-Cter in SUMO1); alternate linkage. Residue Lys-2734 forms a Glycyl lysine isopeptide (Lys-Gly) (interchain with G-Cter in SUMO2); alternate linkage. 2 stretches are compositionally biased toward basic and acidic residues: residues Asp-2751–Ala-2770 and His-2810–Thr-2821. Phosphoserine is present on residues Ser-2827, Ser-2828, and Ser-2838. Residue Lys-2852 forms a Glycyl lysine isopeptide (Lys-Gly) (interchain with G-Cter in SUMO1); alternate linkage. Lys-2852 participates in a covalent cross-link: Glycyl lysine isopeptide (Lys-Gly) (interchain with G-Cter in SUMO2); alternate. The segment covering Thr-2869–Gly-2881 has biased composition (basic and acidic residues). Residues Ser-2941–Asp-2951 are compositionally biased toward polar residues. Residue Lys-2967 forms a Glycyl lysine isopeptide (Lys-Gly) (interchain with G-Cter in SUMO2) linkage. Residues Lys-2982–Leu-2991 show a composition bias toward polar residues. Position 2986 is an N6-acetyllysine (Lys-2986). Over residues Lys-3029–Gly-3039 the composition is skewed to basic residues. ATP is bound at residue Ala-3034–Ser-3041. Ser-3041 is modified (phosphoserine). 2 stretches are compositionally biased toward basic and acidic residues: residues Lys-3071–Gln-3080 and Glu-3113–Pro-3124. Ser-3128 is modified (phosphoserine). The span at Asp-3138 to Arg-3154 shows a compositional bias: basic and acidic residues. Over residues Ser-3207–Thr-3223 the composition is skewed to polar residues. Residues Arg-3228–Cys-3241 are compositionally biased toward basic and acidic residues.

In terms of assembly, interacts with KIF15. Interacts (via the FHA domain) with NIFK. Interacts with PPP1CC. Component of a complex at least composed of ZNF335, HCFC1, CCAR2, EMSY, MKI67, RBBP5, ASH2L and WDR5; the complex is formed as a result of interactions between components of a nuclear receptor-mediated transcription complex and a histone methylation complex. Interacts with ZNF335. In terms of processing, hyperphosphorylated by CDK1 in mitosis; hyperphosphorylatiom prevents undergoing liquid-liquid phase separation. Dephosphorylated by PPP1CC at the onset of anaphase. Dephosphorylated by protein phosphatase 2A (PP2A) at the onset of anaphase. Dephosphorylation by protein phosphatase 2A (PP2A) and simultaneous exposure of the positively charged patch (CP) during mitotic exit induce the RNA-dependent formation of a liquid-like condensed phase on the chromosome surface. Post-translationally, ubiquitinated by the APC/C complex after neuronal progenitors exit mitosis during brain development, leading to clearance from constitutive heterochromatin.

The protein localises to the chromosome. The protein resides in the nucleus. It is found in the nucleolus. Functionally, protein that associates with the surface of mitotic chromosomes and acts both as a chromosome repellent during early mitosis and chromosome attractant during late mitosis. Required to maintain individual mitotic chromosomes dispersed in the cytoplasm following nuclear envelope disassembly. During early mitosis, relocalizes from nucleoli to the chromosome surface where it forms extended brush structures that cover a substantial fraction of the chromosome surface. The MKI67 brush structure prevents chromosomes from collapsing into a single chromatin mass by forming a steric and electrostatic charge barrier: the protein has a high net electrical charge and acts as a surfactant, dispersing chromosomes and enabling independent chromosome motility. During mitotic anaphase, the MKI67 brush structure collapses and MKI67 switches from a chromosome repellent to a chromosome attractant to promote chromosome clustering and facilitate the exclusion of large cytoplasmic particles from the future nuclear space. Mechanistically, dephosphorylation during mitotic exit and simultaneous exposure of a conserved basic patch induce the RNA-dependent formation of a liquid-like condensed phase on the chromosome surface, promoting coalescence of neighboring chromosome surfaces and clustering of chromosomes. Binds premature ribosomal RNAs during anaphase; promoting liquid-liquid phase separation. Binds DNA, with a preference for supercoiled DNA and AT-rich DNA. Does not contribute to the internal structure of mitotic chromosomes. May play a role in chromatin organization; it is however unclear whether it plays a direct role in chromatin organization or whether it is an indirect consequence of its function in mitotic chromosome. The sequence is that of Proliferation marker protein Ki-67 from Homo sapiens (Human).